We begin with the raw amino-acid sequence, 98 residues long: Cuticle protein 67, isoform A (98 aa).

Repeat copies occupy residues 7–10, 15–18, 22–25, 79–82, 86–89, and 92–95.

Component of the cuticle of migratory locust which contains more than 100 different structural proteins. The polypeptide is Cuticle protein 67, isoform A (Locusta migratoria (Migratory locust)).